Reading from the N-terminus, the 359-residue chain is Holliday junction branch migration complex subunit RuvB (359 aa).

Residues 1–10 (MPEHDPHQEN) show a composition bias toward basic and acidic residues. The tract at residues 1–20 (MPEHDPHQENRTVSSVRLED) is disordered. The segment at 4-188 (HDPHQENRTV…FGIPLRLIFY (185 aa)) is large ATPase domain (RuvB-L). Residues leucine 27, arginine 28, glycine 69, lysine 72, threonine 73, threonine 74, 135-137 (EDF), arginine 178, tyrosine 188, and arginine 225 contribute to the ATP site. Threonine 73 provides a ligand contact to Mg(2+). A small ATPAse domain (RuvB-S) region spans residues 189–259 (TASELELIVS…TADAALQRLE (71 aa)). The segment at 262–359 (SLGLDAMDRR…LLHRDGSADE (98 aa)) is head domain (RuvB-H). DNA-binding residues include arginine 298, arginine 317, and arginine 322.

This sequence belongs to the RuvB family. As to quaternary structure, homohexamer. Forms an RuvA(8)-RuvB(12)-Holliday junction (HJ) complex. HJ DNA is sandwiched between 2 RuvA tetramers; dsDNA enters through RuvA and exits via RuvB. An RuvB hexamer assembles on each DNA strand where it exits the tetramer. Each RuvB hexamer is contacted by two RuvA subunits (via domain III) on 2 adjacent RuvB subunits; this complex drives branch migration. In the full resolvosome a probable DNA-RuvA(4)-RuvB(12)-RuvC(2) complex forms which resolves the HJ.

The protein localises to the cytoplasm. The enzyme catalyses ATP + H2O = ADP + phosphate + H(+). The RuvA-RuvB-RuvC complex processes Holliday junction (HJ) DNA during genetic recombination and DNA repair, while the RuvA-RuvB complex plays an important role in the rescue of blocked DNA replication forks via replication fork reversal (RFR). RuvA specifically binds to HJ cruciform DNA, conferring on it an open structure. The RuvB hexamer acts as an ATP-dependent pump, pulling dsDNA into and through the RuvAB complex. RuvB forms 2 homohexamers on either side of HJ DNA bound by 1 or 2 RuvA tetramers; 4 subunits per hexamer contact DNA at a time. Coordinated motions by a converter formed by DNA-disengaged RuvB subunits stimulates ATP hydrolysis and nucleotide exchange. Immobilization of the converter enables RuvB to convert the ATP-contained energy into a lever motion, pulling 2 nucleotides of DNA out of the RuvA tetramer per ATP hydrolyzed, thus driving DNA branch migration. The RuvB motors rotate together with the DNA substrate, which together with the progressing nucleotide cycle form the mechanistic basis for DNA recombination by continuous HJ branch migration. Branch migration allows RuvC to scan DNA until it finds its consensus sequence, where it cleaves and resolves cruciform DNA. This is Holliday junction branch migration complex subunit RuvB from Granulibacter bethesdensis (strain ATCC BAA-1260 / CGDNIH1).